Consider the following 183-residue polypeptide: Large ribosomal subunit protein uL5 (183 aa).

It belongs to the universal ribosomal protein uL5 family. As to quaternary structure, part of the 50S ribosomal subunit; part of the 5S rRNA/L5/L18/L25 subcomplex. Contacts the 5S rRNA and the P site tRNA. Forms a bridge to the 30S subunit in the 70S ribosome.

Functionally, this is one of the proteins that bind and probably mediate the attachment of the 5S RNA into the large ribosomal subunit, where it forms part of the central protuberance. In the 70S ribosome it contacts protein S13 of the 30S subunit (bridge B1b), connecting the 2 subunits; this bridge is implicated in subunit movement. Contacts the P site tRNA; the 5S rRNA and some of its associated proteins might help stabilize positioning of ribosome-bound tRNAs. This Kosmotoga olearia (strain ATCC BAA-1733 / DSM 21960 / TBF 19.5.1) protein is Large ribosomal subunit protein uL5.